The sequence spans 159 residues: Aspartate carbamoyltransferase regulatory chain (159 aa).

4 residues coordinate Zn(2+): Cys108, Cys113, Cys138, and Cys141.

It belongs to the PyrI family. In terms of assembly, contains catalytic and regulatory chains. Zn(2+) serves as cofactor.

In terms of biological role, involved in allosteric regulation of aspartate carbamoyltransferase. The sequence is that of Aspartate carbamoyltransferase regulatory chain from Thermofilum pendens (strain DSM 2475 / Hrk 5).